A 473-amino-acid chain; its full sequence is Microtubule-binding protein TANGLED (473 aa).

A required for binding to TAN and location to the cortical division sites (CDS) during cytokinesis region spans residues 1-132 (MVARTPQKQR…VTRDIVDAIA (132 aa)). 2 disordered regions span residues 131–218 (IAPK…ENSF) and 290–354 (ASKF…LSTA). Polar residues-rich tracts occupy residues 205 to 216 (ISPQVKGNNGEN) and 307 to 329 (PTRN…TRTV).

In terms of assembly, interacts with POK1. Strongly expressed in flower buds and root tips.

The protein resides in the nucleus. It localises to the nucleolus. It is found in the cytoplasm. Its subcellular location is the cytoskeleton. The protein localises to the phragmoplast. Its function is as follows. Is required for spatial control cell division during plant development. Through an association with microtubules, acts both for the positioning of cytoskeletal arrays that establish planes of cell division during prophase and for spatial guidance of expanding phragmoplasts toward preestablished cortical division sites (CDS) during cytokinesis. This chain is Microtubule-binding protein TANGLED (TAN), found in Arabidopsis thaliana (Mouse-ear cress).